A 371-amino-acid chain; its full sequence is Protein SPATA31F3 (371 aa).

Residues 7–29 (ILWDVGSSVYTYGSLFIIALIIW) form a helical membrane-spanning segment. Residues 62-86 (LRVKKRTTKEETEKLQKLLSNMKRQ) adopt a coiled-coil conformation. Composition is skewed to polar residues over residues 189–203 (LSKV…LSSQ) and 244–266 (PQQQ…SSSS). Disordered regions lie at residues 189-222 (LSKV…STDQ), 240-299 (YHPA…EAEM), and 326-371 (YKSE…KRNI). Residues Ser197 and Ser198 each carry the phosphoserine modification. Over residues 277 to 287 (QKKRKKTKKLV) the composition is skewed to basic residues. Over residues 330-362 (TGAKPKTGEPKKSSAKVRAEEPNLEKHAKDLKA) the composition is skewed to basic and acidic residues.

The protein belongs to the SPATA31 family.

It localises to the membrane. This Mus musculus (Mouse) protein is Protein SPATA31F3 (Spata31f3).